The following is a 453-amino-acid chain: Glutamyl-tRNA reductase (453 aa).

Substrate-binding positions include 50–53 (TCNR), serine 110, 115–117 (EPQ), and glutamine 121. Cysteine 51 functions as the Nucleophile in the catalytic mechanism. 190-195 (GAGEMA) contributes to the NADP(+) binding site. Residues 423-436 (REKVPTDAHADRKP) show a composition bias toward basic and acidic residues. The interval 423–453 (REKVPTDAHADRKPPNFAETSDDFDVTDASE) is disordered. The segment covering 442 to 453 (TSDDFDVTDASE) has biased composition (acidic residues).

It belongs to the glutamyl-tRNA reductase family. As to quaternary structure, homodimer.

The catalysed reaction is (S)-4-amino-5-oxopentanoate + tRNA(Glu) + NADP(+) = L-glutamyl-tRNA(Glu) + NADPH + H(+). It participates in porphyrin-containing compound metabolism; protoporphyrin-IX biosynthesis; 5-aminolevulinate from L-glutamyl-tRNA(Glu): step 1/2. In terms of biological role, catalyzes the NADPH-dependent reduction of glutamyl-tRNA(Glu) to glutamate 1-semialdehyde (GSA). In Solidesulfovibrio magneticus (strain ATCC 700980 / DSM 13731 / RS-1) (Desulfovibrio magneticus), this protein is Glutamyl-tRNA reductase.